Here is a 40-residue protein sequence, read N- to C-terminus: Natriuretic peptide PpNP-a (40 aa).

The propeptide occupies 1 to 8 (SGSKTANI). The segment at 1–40 (SGSKTANIGDGCFGVPIDHIGSTSGMGCGSPRPKPTPGGS) is disordered. The cysteines at positions 12 and 28 are disulfide-linked.

It belongs to the natriuretic peptide family. In terms of tissue distribution, expressed by the venom gland.

The protein localises to the secreted. Functionally, snake venom natriuretic peptide that targets both NPR1 and NPR2. Exhibits hypotensive and vasodepressor activities. This chain is Natriuretic peptide PpNP-a, found in Pseudechis porphyriacus (Red-bellied black snake).